We begin with the raw amino-acid sequence, 187 residues long: ATP synthase subunit b, chloroplastic (187 aa).

The chain crosses the membrane as a helical span at residues 29–49 (LAVVLGVLIYLGKGVCAGCIL).

This sequence belongs to the ATPase B chain family. F-type ATPases have 2 components, F(1) - the catalytic core - and F(0) - the membrane proton channel. F(1) has five subunits: alpha(3), beta(3), gamma(1), delta(1), epsilon(1). F(0) has four main subunits: a(1), b(1), b'(1) and c(10-14). The alpha and beta chains form an alternating ring which encloses part of the gamma chain. F(1) is attached to F(0) by a central stalk formed by the gamma and epsilon chains, while a peripheral stalk is formed by the delta, b and b' chains.

The protein localises to the plastid. The protein resides in the chloroplast thylakoid membrane. Its function is as follows. F(1)F(0) ATP synthase produces ATP from ADP in the presence of a proton or sodium gradient. F-type ATPases consist of two structural domains, F(1) containing the extramembraneous catalytic core and F(0) containing the membrane proton channel, linked together by a central stalk and a peripheral stalk. During catalysis, ATP synthesis in the catalytic domain of F(1) is coupled via a rotary mechanism of the central stalk subunits to proton translocation. In terms of biological role, component of the F(0) channel, it forms part of the peripheral stalk, linking F(1) to F(0). This is ATP synthase subunit b, chloroplastic from Angiopteris evecta (Mule's foot fern).